A 208-amino-acid polypeptide reads, in one-letter code: NAD(P)H-quinone oxidoreductase subunit I (208 aa).

4Fe-4S ferredoxin-type domains lie at 55 to 84 (GRIH…VDWV) and 95 to 124 (RNYS…MTEE). Cys-64, Cys-67, Cys-70, Cys-74, Cys-104, Cys-107, Cys-110, and Cys-114 together coordinate [4Fe-4S] cluster.

Belongs to the complex I 23 kDa subunit family. In terms of assembly, NDH-1 is composed of at least 11 different subunits. The cofactor is [4Fe-4S] cluster.

The protein resides in the cellular thylakoid membrane. It catalyses the reaction a plastoquinone + NADH + (n+1) H(+)(in) = a plastoquinol + NAD(+) + n H(+)(out). The enzyme catalyses a plastoquinone + NADPH + (n+1) H(+)(in) = a plastoquinol + NADP(+) + n H(+)(out). NDH-1 shuttles electrons from an unknown electron donor, via FMN and iron-sulfur (Fe-S) centers, to quinones in the respiratory and/or the photosynthetic chain. The immediate electron acceptor for the enzyme in this species is believed to be plastoquinone. Couples the redox reaction to proton translocation, and thus conserves the redox energy in a proton gradient. The chain is NAD(P)H-quinone oxidoreductase subunit I from Prochlorococcus marinus subsp. pastoris (strain CCMP1986 / NIES-2087 / MED4).